Reading from the N-terminus, the 113-residue chain is uncharacterized protein (113 aa).

2 helical membrane-spanning segments follow: residues F25–I45 and F49–W69.

Its subcellular location is the host membrane. This is an uncharacterized protein from Spiroplasma citri (SpV1).